We begin with the raw amino-acid sequence, 452 residues long: Bifunctional protein GlmU (452 aa).

Residues 1–231 (MSRTCLAVIL…EAELAGCNNR (231 aa)) are pyrophosphorylase. UDP-N-acetyl-alpha-D-glucosamine contacts are provided by residues 10–13 (LAAG), Lys-24, Gln-77, 82–83 (GT), 105–107 (YGD), Gly-143, Glu-157, Asn-172, and Asn-229. Asp-107 is a binding site for Mg(2+). Mg(2+) is bound at residue Asn-229. The segment at 232-252 (AELAVIEKLWQERRRHELMLS) is linker. An N-acetyltransferase region spans residues 253–452 (GVSMIAPETV…MAIKAFSGKV (200 aa)). Residues Arg-318 and Lys-336 each contribute to the UDP-N-acetyl-alpha-D-glucosamine site. His-348 functions as the Proton acceptor in the catalytic mechanism. Residues Tyr-351 and Asn-362 each contribute to the UDP-N-acetyl-alpha-D-glucosamine site. Residues Ala-365, 371–372 (NY), Ser-390, Ser-408, and Arg-425 each bind acetyl-CoA.

In the N-terminal section; belongs to the N-acetylglucosamine-1-phosphate uridyltransferase family. The protein in the C-terminal section; belongs to the transferase hexapeptide repeat family. Homotrimer. It depends on Mg(2+) as a cofactor.

It is found in the cytoplasm. It catalyses the reaction alpha-D-glucosamine 1-phosphate + acetyl-CoA = N-acetyl-alpha-D-glucosamine 1-phosphate + CoA + H(+). The catalysed reaction is N-acetyl-alpha-D-glucosamine 1-phosphate + UTP + H(+) = UDP-N-acetyl-alpha-D-glucosamine + diphosphate. The protein operates within nucleotide-sugar biosynthesis; UDP-N-acetyl-alpha-D-glucosamine biosynthesis; N-acetyl-alpha-D-glucosamine 1-phosphate from alpha-D-glucosamine 6-phosphate (route II): step 2/2. It functions in the pathway nucleotide-sugar biosynthesis; UDP-N-acetyl-alpha-D-glucosamine biosynthesis; UDP-N-acetyl-alpha-D-glucosamine from N-acetyl-alpha-D-glucosamine 1-phosphate: step 1/1. Its pathway is bacterial outer membrane biogenesis; LPS lipid A biosynthesis. In terms of biological role, catalyzes the last two sequential reactions in the de novo biosynthetic pathway for UDP-N-acetylglucosamine (UDP-GlcNAc). The C-terminal domain catalyzes the transfer of acetyl group from acetyl coenzyme A to glucosamine-1-phosphate (GlcN-1-P) to produce N-acetylglucosamine-1-phosphate (GlcNAc-1-P), which is converted into UDP-GlcNAc by the transfer of uridine 5-monophosphate (from uridine 5-triphosphate), a reaction catalyzed by the N-terminal domain. The chain is Bifunctional protein GlmU from Allorhizobium ampelinum (strain ATCC BAA-846 / DSM 112012 / S4) (Agrobacterium vitis (strain S4)).